The chain runs to 579 residues: Carotenoid-cleaving dioxygenase, mitochondrial (579 aa).

Fe cation is bound by residues histidine 226, histidine 286, histidine 357, and histidine 573.

This sequence belongs to the carotenoid oxygenase family. The cofactor is Fe(2+). Highly expressed in retinal pigment epithelium. Also expressed in stomach, small intestine, liver, testis, kidney, adrenal gland, pancreas, heart, skeletal muscle and prostate (at protein level).

It is found in the mitochondrion. The enzyme catalyses all-trans-beta-carotene + O2 = beta-ionone + all-trans-10'-apo-beta-carotenal. The catalysed reaction is 5-cis-lycopene + O2 = 5-cis-10'-apo-lycopenal + (3E,5E)-6,10-dimethylundeca-3,5,9-trien-2-one. It carries out the reaction 13-cis-lycopene + O2 = 13-cis-10'-apo-lycopenal + (3E,5E)-6,10-dimethylundeca-3,5,9-trien-2-one. It catalyses the reaction lutein + O2 = (3R,6R)-hydroxy-alpha-ionone + (3R)-3-hydroxy-10'-apo-beta-carotenal. The enzyme catalyses lutein + O2 = (3R,6R)-3-hydroxy-10'-apo-alpha-carotenal + (3R)-hydroxy-beta-ionone. The catalysed reaction is all-trans-zeaxanthin + 2 O2 = 4,9-dimethyldodeca-2,4,6,8,10-pentaenedial + 2 (3R)-hydroxy-beta-ionone. It carries out the reaction all-trans-zeaxanthin + O2 = (3R)-3-hydroxy-10'-apo-beta-carotenal + (3R)-hydroxy-beta-ionone. It catalyses the reaction beta-cryptoxanthin + O2 = all-trans-10'-apo-beta-carotenal + (3R)-hydroxy-beta-ionone. The enzyme catalyses all-trans-10'-apo-beta-carotenal + O2 = beta-ionone + 4,9-dimethyldodeca-2,4,6,8,10-pentaenedial. The catalysed reaction is (3R)-3-hydroxy-10'-apo-beta-carotenal + O2 = 4,9-dimethyldodeca-2,4,6,8,10-pentaenedial + (3R)-hydroxy-beta-ionone. It carries out the reaction (3R,6R)-3-hydroxy-10'-apo-alpha-carotenal + O2 = (3R,6R)-hydroxy-alpha-ionone + 4,9-dimethyldodeca-2,4,6,8,10-pentaenedial. Functionally, broad specificity mitochondrial dioxygenase that mediates the asymmetric oxidative cleavage of carotenoids. Cleaves carotenes (pure hydrocarbon carotenoids) such as all-trans-beta-carotene and lycopene as well as xanthophylls (oxygenated carotenoids) such as zeaxanthin, lutein and beta-cryptoxanthin at both the 9,10 and the 9',10' carbon-carbon double bond. Through its function in carotenoids metabolism regulates oxidative stress and the production of important signaling molecules. The sequence is that of Carotenoid-cleaving dioxygenase, mitochondrial from Homo sapiens (Human).